The chain runs to 520 residues: MANTTESAKDRVVIFDTTLRDGEQCPGATMTLDEKLAVAELLDAMGVDIIEAGFPIASNGDFEAVSEIARRTKRATIAGLARAIPADIARAGEAVRHAKAGRIHTFVSTSAIHLAHQMRKTQDEVIEIILKTVTQARDLVEDVEWSAMDATRTDIDYLCRCVEAAIRSGATTINLPDTVGYATPQEYGAMFRQVRERVPNSDKAIFSVHCHNDLGLAVANSLAGLEGGARQIECTVNGIGERAGNAALEEIVMAIRTRADVMPYDTGIDTTMLTRASKLVSHAANFPVQYNKAIVGRNAFAHESGIHQDGMLKHSETYEIMTPASVGLSKTSLVMGKHSGRAAFKSKLAELGISLSDNQFQDVFERFKDLADRKKHVYDEDIEALVDEKLATAHDRIKLLSLSVIAGTRGPQRATMKIEMDGRTFTEEADGNGPVDAVFNAIHEIVPHDAVLELYQVHAVTEGTDAQAEVSVRLKAGERSVTARGADPDTLVASAKAYLSALNKLSAASVRLHAQHAAVV.

Residues 12-274 (VVIFDTTLRD…DTGIDTTMLT (263 aa)) enclose the Pyruvate carboxyltransferase domain. The Mn(2+) site is built by D21, H209, H211, and N245. A regulatory domain region spans residues 398–520 (KLLSLSVIAG…RLHAQHAAVV (123 aa)).

The protein belongs to the alpha-IPM synthase/homocitrate synthase family. LeuA type 1 subfamily. Homodimer. The cofactor is Mn(2+).

It localises to the cytoplasm. It catalyses the reaction 3-methyl-2-oxobutanoate + acetyl-CoA + H2O = (2S)-2-isopropylmalate + CoA + H(+). Its pathway is amino-acid biosynthesis; L-leucine biosynthesis; L-leucine from 3-methyl-2-oxobutanoate: step 1/4. Catalyzes the condensation of the acetyl group of acetyl-CoA with 3-methyl-2-oxobutanoate (2-ketoisovalerate) to form 3-carboxy-3-hydroxy-4-methylpentanoate (2-isopropylmalate). The polypeptide is 2-isopropylmalate synthase (Methylorubrum populi (strain ATCC BAA-705 / NCIMB 13946 / BJ001) (Methylobacterium populi)).